Reading from the N-terminus, the 563-residue chain is Lipoprotein LpqB (563 aa).

A signal peptide spans 1 to 19 (MRRMKALTAAMTAALLVSG). Cys20 is lipidated: N-palmitoyl cysteine. Cys20 carries S-diacylglycerol cysteine lipidation.

It belongs to the LpqB lipoprotein family.

It is found in the cell membrane. This is Lipoprotein LpqB from Corynebacterium efficiens (strain DSM 44549 / YS-314 / AJ 12310 / JCM 11189 / NBRC 100395).